The sequence spans 624 residues: Aeromonas extracellular serine protease (624 aa).

Residues 1–24 form the signal peptide; it reads MKQTSLALAITALLSTLPSALVQA. A disulfide bond links Cys-28 and Cys-48. Asn-53 serves as a coordination point for Ca(2+). One can recognise a Peptidase S8 domain in the interval 59 to 421; sequence QWYLLNSGQD…GKVRDVKGLE (363 aa). Asp-102 serves as the catalytic Charge relay system. Asp-111 contacts Ca(2+). The segment at 116 to 140 is disordered; that stretch reads VRPGSKNVVTGSDDPTPTDPDTAHG. The Charge relay system role is filled by His-139. Positions 150, 152, 154, 156, 321, 322, 324, 327, 330, and 350 each coordinate Ca(2+). Cys-325 and Cys-350 are oxidised to a cystine. Ser-360 serves as the catalytic Charge relay system. A P/Homo B domain is found at 456-622; that stretch reads LPPLVQLPWQ…SLRVLGHDAN (167 aa). 6 residues coordinate Ca(2+): Asp-478, Asp-512, Asp-577, Ala-579, Asn-602, and Asn-603.

This sequence belongs to the peptidase S8 family. Furin subfamily. As to quaternary structure, forms a complex with the chaperone ORF2 in the periplasm. After translocation of the ASP-ORF2 complex from the periplasm to the extracellular space, the complex is dissociated in a pH-dependent manner. Ca(2+) serves as cofactor.

The protein resides in the periplasm. Its subcellular location is the secreted. The catalysed reaction is Cleavage of -Lys-Lys-|-Xaa and -Lys-Arg-|-Xaa bonds.. Folding, maturation and production of the active form of the protease by the cell requires a protein (ORF2), encoded just downstream of asp, which acts as a chaperone. Formation of a complex with ORF2 in the periplasm also inactivates the protease activity and likely protects ASP from intrinsic proteases. In vitro, protease activity is inhibited by human alpha-2-macroglobulin, suggesting that this inhibitor can impede ASP virulence activities in A.sobria infection sites. However, slow ASP inhibition by alpha-2-macroglobulin in plasma may indicate insufficient ASP control in vivo. Activity is inhibited by serine protease inhibitors such as 4-(2-aminoethyl)-benzenesulfonyl fluoride (AEBSF) and diisopropyl fluorophosphate (DFP). Not inhibited by metallo-protease inhibitors and cysteine protease inhibitors. The treatment with reagents to modify sulfhydryl group do not reduce the activity. Exhibits serine protease activity. Preferentially cleaves the peptide bond following two basic residues, one of which is Lys, but does not recognize the bond following a single basic residue. Probable potent virulence factor that cleaves various host plasma proteins, including prekallikrein, prothrombin and fibrinogen. ASP induces vascular leakage and reduction in blood pressure by activating the host plasma kallikrein/kinin system. It affects the host coagulation system during infection through activation of prothrombin to alpha-thrombin and degradation of fibrinogen, which impairs plasma clottability. It also hydrolyzes the complement component C5, releasing the C5a anaphylatoxin, which causes the formation of pus and edema. In addition, degrades its external chaperone ORF2 after the secretion of the ASP-ORF2 complex. This chain is Aeromonas extracellular serine protease, found in Aeromonas sobria.